A 267-amino-acid chain; its full sequence is 4-hydroxy-tetrahydrodipicolinate reductase (267 aa).

8 to 13 lines the NAD(+) pocket; the sequence is GAAGRM. Arg-35 contacts NADP(+). NAD(+) contacts are provided by residues 98 to 100 and 122 to 125; these read GTT and AANF. The active-site Proton donor/acceptor is His-155. His-156 serves as a coordination point for (S)-2,3,4,5-tetrahydrodipicolinate. The active-site Proton donor is Lys-159. 165–166 is a binding site for (S)-2,3,4,5-tetrahydrodipicolinate; sequence GT.

The protein belongs to the DapB family.

It localises to the cytoplasm. It carries out the reaction (S)-2,3,4,5-tetrahydrodipicolinate + NAD(+) + H2O = (2S,4S)-4-hydroxy-2,3,4,5-tetrahydrodipicolinate + NADH + H(+). The catalysed reaction is (S)-2,3,4,5-tetrahydrodipicolinate + NADP(+) + H2O = (2S,4S)-4-hydroxy-2,3,4,5-tetrahydrodipicolinate + NADPH + H(+). Its pathway is amino-acid biosynthesis; L-lysine biosynthesis via DAP pathway; (S)-tetrahydrodipicolinate from L-aspartate: step 4/4. In terms of biological role, catalyzes the conversion of 4-hydroxy-tetrahydrodipicolinate (HTPA) to tetrahydrodipicolinate. This is 4-hydroxy-tetrahydrodipicolinate reductase from Azotobacter vinelandii (strain DJ / ATCC BAA-1303).